Here is a 332-residue protein sequence, read N- to C-terminus: 4-hydroxy-3-methylbut-2-enyl diphosphate reductase (332 aa).

Cysteine 13 contacts [4Fe-4S] cluster. Positions 41 and 75 each coordinate (2E)-4-hydroxy-3-methylbut-2-enyl diphosphate. Residues histidine 41 and histidine 75 each coordinate dimethylallyl diphosphate. Isopentenyl diphosphate-binding residues include histidine 41 and histidine 75. Cysteine 97 contacts [4Fe-4S] cluster. (2E)-4-hydroxy-3-methylbut-2-enyl diphosphate is bound at residue histidine 125. Residue histidine 125 participates in dimethylallyl diphosphate binding. Histidine 125 lines the isopentenyl diphosphate pocket. Glutamate 127 functions as the Proton donor in the catalytic mechanism. Threonine 168 lines the (2E)-4-hydroxy-3-methylbut-2-enyl diphosphate pocket. Cysteine 229 contributes to the [4Fe-4S] cluster binding site. The (2E)-4-hydroxy-3-methylbut-2-enyl diphosphate site is built by serine 257, serine 258, asparagine 259, and serine 306. Dimethylallyl diphosphate-binding residues include serine 257, serine 258, asparagine 259, and serine 306. Residues serine 257, serine 258, asparagine 259, and serine 306 each contribute to the isopentenyl diphosphate site.

The protein belongs to the IspH family. It depends on [4Fe-4S] cluster as a cofactor.

It catalyses the reaction isopentenyl diphosphate + 2 oxidized [2Fe-2S]-[ferredoxin] + H2O = (2E)-4-hydroxy-3-methylbut-2-enyl diphosphate + 2 reduced [2Fe-2S]-[ferredoxin] + 2 H(+). It carries out the reaction dimethylallyl diphosphate + 2 oxidized [2Fe-2S]-[ferredoxin] + H2O = (2E)-4-hydroxy-3-methylbut-2-enyl diphosphate + 2 reduced [2Fe-2S]-[ferredoxin] + 2 H(+). It functions in the pathway isoprenoid biosynthesis; dimethylallyl diphosphate biosynthesis; dimethylallyl diphosphate from (2E)-4-hydroxy-3-methylbutenyl diphosphate: step 1/1. It participates in isoprenoid biosynthesis; isopentenyl diphosphate biosynthesis via DXP pathway; isopentenyl diphosphate from 1-deoxy-D-xylulose 5-phosphate: step 6/6. In terms of biological role, catalyzes the conversion of 1-hydroxy-2-methyl-2-(E)-butenyl 4-diphosphate (HMBPP) into a mixture of isopentenyl diphosphate (IPP) and dimethylallyl diphosphate (DMAPP). Acts in the terminal step of the DOXP/MEP pathway for isoprenoid precursor biosynthesis. In Chlorobaculum parvum (strain DSM 263 / NCIMB 8327) (Chlorobium vibrioforme subsp. thiosulfatophilum), this protein is 4-hydroxy-3-methylbut-2-enyl diphosphate reductase.